A 469-amino-acid polypeptide reads, in one-letter code: Aspartyl/glutamyl-tRNA(Asn/Gln) amidotransferase subunit B (469 aa).

It belongs to the GatB/GatE family. GatB subfamily. In terms of assembly, heterotrimer of A, B and C subunits.

The catalysed reaction is L-glutamyl-tRNA(Gln) + L-glutamine + ATP + H2O = L-glutaminyl-tRNA(Gln) + L-glutamate + ADP + phosphate + H(+). It catalyses the reaction L-aspartyl-tRNA(Asn) + L-glutamine + ATP + H2O = L-asparaginyl-tRNA(Asn) + L-glutamate + ADP + phosphate + 2 H(+). Functionally, allows the formation of correctly charged Asn-tRNA(Asn) or Gln-tRNA(Gln) through the transamidation of misacylated Asp-tRNA(Asn) or Glu-tRNA(Gln) in organisms which lack either or both of asparaginyl-tRNA or glutaminyl-tRNA synthetases. The reaction takes place in the presence of glutamine and ATP through an activated phospho-Asp-tRNA(Asn) or phospho-Glu-tRNA(Gln). The polypeptide is Aspartyl/glutamyl-tRNA(Asn/Gln) amidotransferase subunit B (Methanococcus maripaludis (strain C6 / ATCC BAA-1332)).